We begin with the raw amino-acid sequence, 272 residues long: Acetylglutamate kinase (272 aa).

Residues 46-47, arginine 68, and asparagine 166 each bind substrate; that span reads GA.

It belongs to the acetylglutamate kinase family. ArgB subfamily.

Its subcellular location is the cytoplasm. It carries out the reaction N-acetyl-L-glutamate + ATP = N-acetyl-L-glutamyl 5-phosphate + ADP. It functions in the pathway amino-acid biosynthesis; L-arginine biosynthesis; N(2)-acetyl-L-ornithine from L-glutamate: step 2/4. In terms of biological role, catalyzes the ATP-dependent phosphorylation of N-acetyl-L-glutamate. The protein is Acetylglutamate kinase of Dehalococcoides mccartyi (strain CBDB1).